Reading from the N-terminus, the 144-residue chain is D-aminoacyl-tRNA deacylase (144 aa).

Positions 136–137 (GP) match the Gly-cisPro motif, important for rejection of L-amino acids motif.

This sequence belongs to the DTD family. As to quaternary structure, homodimer.

The protein localises to the cytoplasm. It catalyses the reaction glycyl-tRNA(Ala) + H2O = tRNA(Ala) + glycine + H(+). It carries out the reaction a D-aminoacyl-tRNA + H2O = a tRNA + a D-alpha-amino acid + H(+). Its function is as follows. An aminoacyl-tRNA editing enzyme that deacylates mischarged D-aminoacyl-tRNAs. Also deacylates mischarged glycyl-tRNA(Ala), protecting cells against glycine mischarging by AlaRS. Acts via tRNA-based rather than protein-based catalysis; rejects L-amino acids rather than detecting D-amino acids in the active site. By recycling D-aminoacyl-tRNA to D-amino acids and free tRNA molecules, this enzyme counteracts the toxicity associated with the formation of D-aminoacyl-tRNA entities in vivo and helps enforce protein L-homochirality. This chain is D-aminoacyl-tRNA deacylase, found in Corynebacterium glutamicum (strain R).